Consider the following 508-residue polypeptide: Photosystem II CP47 reaction center protein (508 aa).

The next 6 helical transmembrane spans lie at 21-36, 101-115, 140-156, 203-218, 237-252, and 457-472; these read SVHI…WAGS, IVFS…IWHW, GIHL…FGAF, IAAG…FHLS, VLSS…AFVV, and SFAL…HGAR.

The protein belongs to the PsbB/PsbC family. PsbB subfamily. In terms of assembly, PSII is composed of 1 copy each of membrane proteins PsbA, PsbB, PsbC, PsbD, PsbE, PsbF, PsbH, PsbI, PsbJ, PsbK, PsbL, PsbM, PsbT, PsbX, PsbY, PsbZ, Psb30/Ycf12, at least 3 peripheral proteins of the oxygen-evolving complex and a large number of cofactors. It forms dimeric complexes. Requires Binds multiple chlorophylls. PSII binds additional chlorophylls, carotenoids and specific lipids. as cofactor.

Its subcellular location is the plastid. The protein localises to the chloroplast thylakoid membrane. In terms of biological role, one of the components of the core complex of photosystem II (PSII). It binds chlorophyll and helps catalyze the primary light-induced photochemical processes of PSII. PSII is a light-driven water:plastoquinone oxidoreductase, using light energy to abstract electrons from H(2)O, generating O(2) and a proton gradient subsequently used for ATP formation. This Phaseolus vulgaris (Kidney bean) protein is Photosystem II CP47 reaction center protein.